The primary structure comprises 91 residues: Beta-microseminoprotein (91 aa).

Cystine bridges form between C2–C54, C22–C46, C41–C75, C44–C53, and C68–C88.

Expressed in ciliated epithelium of nidamental gland and in secretory-like cells in accessory nidamental gland (at protein level). Expressed in ovary, nidamental gland and accessory nidamental gland.

The protein localises to the secreted. In terms of biological role, acts as a pheromone. Triggers aggressive behaviors in males such as fin beating, lunging and grabbing. These behaviors form part of the competition for fertile females. This is Beta-microseminoprotein from Doryteuthis pealeii (Longfin inshore squid).